The chain runs to 260 residues: Nuclear receptor subfamily 0 group B member 2 (260 aa).

The NR LBD domain occupies 16-260 (SHPTILYTLL…ELLEDMLLLR (245 aa)). R57 carries the post-translational modification Symmetric dimethylarginine; by PRMT5.

Belongs to the nuclear hormone receptor family. NR0 subfamily. In terms of assembly, heterodimer; efficient DNA binding requires dimerization with another bHLH protein. Interacts (via N-terminus) with NEUROD1 (via N-terminus and C-terminus). Interacts with ID2. Interacts with NR1I3 and EID1. Interacts with RARA, RXRA, THRB, NR5A1, NR5A2, PPARA and PPARG. Interacts with RORG, NFIL3, NR1D1 and BHLHE41. Interacts with HNF4A; the resulting heterodimer is transcriptionally inactive. Interacts with DDX3X; this interaction disrupts the interaction between HNF4 and NR0B2/SHP that forms inactive heterodimers and enhances the formation of active HNF4 homodimers. Post-translationally, arginine methylation by PRMT5 enhances repression activity of metabolic genes in liver in response to bile acid signaling, by increasing interaction with cofactors. In terms of tissue distribution, detected in kidney, testis, heart and liver.

The protein localises to the cytoplasm. The protein resides in the nucleus. Functionally, transcriptional regulator that acts as a negative regulator of receptor-dependent signaling pathways. Specifically inhibits transactivation of the nuclear receptor with which it interacts. Inhibits transcriptional activity of NEUROD1 on E-box-containing promoter by interfering with the coactivation function of the p300/CBP-mediated transcription complex for NEUROD1. Essential component of the liver circadian clock which via its interaction with NR1D1 and RORG regulates NPAS2-mediated hepatic lipid metabolism. Regulates the circadian expression of cytochrome P450 (CYP) enzymes. Represses: NR5A2 and HNF4A to down-regulate CYP2C38, NFLI3 to up-regulate CYP2A5, BHLHE41/HNF1A axis to up-regulate CYP1A2, CYP2E1 and CYP3A11, and NR1D1 to up-regulate CYP2B10, CYP4A10 and CYP4A14. In Rattus norvegicus (Rat), this protein is Nuclear receptor subfamily 0 group B member 2 (Nr0b2).